A 79-amino-acid polypeptide reads, in one-letter code: Reactive oxygen species modulator 1 (79 aa).

Residues 22-44 (GFVMGCAVGMAAGALFGPFSCLR) form a helical membrane-spanning segment. Positions 42-60 (CLRIGMRGRELMGGIGKTM) are sufficient for antibacterial activity.

This sequence belongs to the MGR2 family.

It is found in the mitochondrion inner membrane. Functionally, has antibacterial activity against a variety of bacteria including S.aureus, P.aeruginosa and M.tuberculosis. Acts by inducing bacterial membrane breakage. Induces production of reactive oxygen species (ROS) which are necessary for cell proliferation. May play a role in inducing oxidative DNA damage and replicative senescence. May play a role in the coordination of mitochondrial morphology and cell proliferation. This chain is Reactive oxygen species modulator 1 (ROMO1), found in Sus scrofa (Pig).